The primary structure comprises 220 residues: Protein-methionine-sulfoxide reductase heme-binding subunit MsrQ (220 aa).

5 consecutive transmembrane segments (helical) span residues 20-40 (IWLLYAVGFVPAVWTFYLGAS), 52-72 (EHTLGLWALRFLILTLMVTPI), 86-106 (ALGLLAFYYALMHFATYMVLD), 122-142 (PFITIGMISLVLLVPLALTSN), and 159-179 (LVYVAIAGGAIHFIMSVKSWP).

This sequence belongs to the MsrQ family. As to quaternary structure, heterodimer of a catalytic subunit (MsrP) and a heme-binding subunit (MsrQ). The cofactor is FMN. It depends on heme b as a cofactor.

Its subcellular location is the cell inner membrane. In terms of biological role, part of the MsrPQ system that repairs oxidized periplasmic proteins containing methionine sulfoxide residues (Met-O), using respiratory chain electrons. Thus protects these proteins from oxidative-stress damage caused by reactive species of oxygen and chlorine generated by the host defense mechanisms. MsrPQ is essential for the maintenance of envelope integrity under bleach stress, rescuing a wide series of structurally unrelated periplasmic proteins from methionine oxidation. MsrQ provides electrons for reduction to the reductase catalytic subunit MsrP, using the quinone pool of the respiratory chain. The chain is Protein-methionine-sulfoxide reductase heme-binding subunit MsrQ from Brucella anthropi (strain ATCC 49188 / DSM 6882 / CCUG 24695 / JCM 21032 / LMG 3331 / NBRC 15819 / NCTC 12168 / Alc 37) (Ochrobactrum anthropi).